The sequence spans 198 residues: Inner membrane-spanning protein YciB (198 aa).

A run of 5 helical transmembrane segments spans residues 36 to 56, 67 to 87, 90 to 110, 133 to 153, and 162 to 182; these read IFSATAMLIISSVVVYGILYI, LTLVACLVFGSLTLAFHSETF, WKAPVVNWLFAVAFAGSHFIG, LNIAWIIFFLFCGAANLYVAF, and FKVFGSLGMTLIFLVGQGIYL.

This sequence belongs to the YciB family.

Its subcellular location is the cell inner membrane. Functionally, plays a role in cell envelope biogenesis, maintenance of cell envelope integrity and membrane homeostasis. This is Inner membrane-spanning protein YciB from Pseudomonas syringae pv. tomato (strain ATCC BAA-871 / DC3000).